The following is a 273-amino-acid chain: Ribosomal RNA small subunit methyltransferase A (273 aa).

Positions 18, 20, 45, 66, 91, and 113 each coordinate S-adenosyl-L-methionine.

It belongs to the class I-like SAM-binding methyltransferase superfamily. rRNA adenine N(6)-methyltransferase family. RsmA subfamily.

The protein localises to the cytoplasm. The catalysed reaction is adenosine(1518)/adenosine(1519) in 16S rRNA + 4 S-adenosyl-L-methionine = N(6)-dimethyladenosine(1518)/N(6)-dimethyladenosine(1519) in 16S rRNA + 4 S-adenosyl-L-homocysteine + 4 H(+). In terms of biological role, specifically dimethylates two adjacent adenosines (A1518 and A1519) in the loop of a conserved hairpin near the 3'-end of 16S rRNA in the 30S particle. May play a critical role in biogenesis of 30S subunits. The chain is Ribosomal RNA small subunit methyltransferase A from Shigella boydii serotype 18 (strain CDC 3083-94 / BS512).